Reading from the N-terminus, the 376-residue chain is Lipid-A-disaccharide synthase (376 aa).

This sequence belongs to the LpxB family.

It catalyses the reaction a lipid X + a UDP-2-N,3-O-bis[(3R)-3-hydroxyacyl]-alpha-D-glucosamine = a lipid A disaccharide + UDP + H(+). It participates in bacterial outer membrane biogenesis; LPS lipid A biosynthesis. In terms of biological role, condensation of UDP-2,3-diacylglucosamine and 2,3-diacylglucosamine-1-phosphate to form lipid A disaccharide, a precursor of lipid A, a phosphorylated glycolipid that anchors the lipopolysaccharide to the outer membrane of the cell. This chain is Lipid-A-disaccharide synthase, found in Coxiella burnetii (strain CbuG_Q212) (Coxiella burnetii (strain Q212)).